Reading from the N-terminus, the 232-residue chain is tRNA1(Val) (adenine(37)-N6)-methyltransferase (232 aa).

Belongs to the methyltransferase superfamily. tRNA (adenine-N(6)-)-methyltransferase family.

It localises to the cytoplasm. The catalysed reaction is adenosine(37) in tRNA1(Val) + S-adenosyl-L-methionine = N(6)-methyladenosine(37) in tRNA1(Val) + S-adenosyl-L-homocysteine + H(+). Specifically methylates the adenine in position 37 of tRNA(1)(Val) (anticodon cmo5UAC). In Haemophilus influenzae (strain 86-028NP), this protein is tRNA1(Val) (adenine(37)-N6)-methyltransferase.